The sequence spans 286 residues: Light-independent protochlorophyllide reductase iron-sulfur ATP-binding protein (286 aa).

Residues Gly-10–Thr-15 and Lys-39 each bind ATP. Residue Ser-14 coordinates Mg(2+). [4Fe-4S] cluster contacts are provided by Cys-95 and Cys-129. ATP is bound at residue Asn-180–Arg-181.

It belongs to the NifH/BchL/ChlL family. In terms of assembly, homodimer. Protochlorophyllide reductase is composed of three subunits; ChlL, ChlN and ChlB. [4Fe-4S] cluster serves as cofactor.

The catalysed reaction is chlorophyllide a + oxidized 2[4Fe-4S]-[ferredoxin] + 2 ADP + 2 phosphate = protochlorophyllide a + reduced 2[4Fe-4S]-[ferredoxin] + 2 ATP + 2 H2O. It functions in the pathway porphyrin-containing compound metabolism; chlorophyll biosynthesis (light-independent). In terms of biological role, component of the dark-operative protochlorophyllide reductase (DPOR) that uses Mg-ATP and reduced ferredoxin to reduce ring D of protochlorophyllide (Pchlide) to form chlorophyllide a (Chlide). This reaction is light-independent. The L component serves as a unique electron donor to the NB-component of the complex, and binds Mg-ATP. This is Light-independent protochlorophyllide reductase iron-sulfur ATP-binding protein from Cyanothece sp. (strain PCC 7425 / ATCC 29141).